Consider the following 236-residue polypeptide: Pyridoxine 5'-phosphate synthase (236 aa).

A 3-amino-2-oxopropyl phosphate-binding site is contributed by Asn-6. 1-deoxy-D-xylulose 5-phosphate is bound at residue 8–9 (DH). Arg-17 provides a ligand contact to 3-amino-2-oxopropyl phosphate. His-42 functions as the Proton acceptor in the catalytic mechanism. Arg-44 and His-49 together coordinate 1-deoxy-D-xylulose 5-phosphate. Catalysis depends on Glu-69, which acts as the Proton acceptor. A 1-deoxy-D-xylulose 5-phosphate-binding site is contributed by Thr-99. Residue His-190 is the Proton donor of the active site. 3-amino-2-oxopropyl phosphate is bound by residues Gly-191 and 212–213 (GH).

It belongs to the PNP synthase family. Homooctamer; tetramer of dimers.

The protein resides in the cytoplasm. It catalyses the reaction 3-amino-2-oxopropyl phosphate + 1-deoxy-D-xylulose 5-phosphate = pyridoxine 5'-phosphate + phosphate + 2 H2O + H(+). Its pathway is cofactor biosynthesis; pyridoxine 5'-phosphate biosynthesis; pyridoxine 5'-phosphate from D-erythrose 4-phosphate: step 5/5. In terms of biological role, catalyzes the complicated ring closure reaction between the two acyclic compounds 1-deoxy-D-xylulose-5-phosphate (DXP) and 3-amino-2-oxopropyl phosphate (1-amino-acetone-3-phosphate or AAP) to form pyridoxine 5'-phosphate (PNP) and inorganic phosphate. In Prosthecochloris aestuarii (strain DSM 271 / SK 413), this protein is Pyridoxine 5'-phosphate synthase.